The sequence spans 1302 residues: Regulator of telomere elongation helicase 1 (1302 aa).

Residues 7–297 (NGVTVDFPFQ…TKTAQQGEPH (291 aa)) form the Helicase ATP-binding domain. 42-49 (SHTGTGKT) serves as a coordination point for ATP. 4 residues coordinate [4Fe-4S] cluster: cysteine 146, cysteine 164, cysteine 173, and cysteine 208. Residues 152 to 168 (KKQESNHIQIHLCRKKV) carry the Nuclear localization signal motif. Positions 251–254 (DEAH) match the DEAH box motif. The span at 758–767 (PAPAPRATAP) shows a compositional bias: low complexity. The disordered stretch occupies residues 758 to 819 (PAPAPRATAP…AAGDPESSLC (62 aa)). Residues 770-780 (REGEDAVREVK) are compositionally biased toward basic and acidic residues. Residues 873–879 (PRGGRKK) carry the Nuclear localization signal motif. 4 disordered regions span residues 981–1006 (RPEH…APDP), 1019–1058 (DPRE…GKQG), 1134–1153 (CTDL…PQEE), and 1160–1234 (VLTH…QAAG). Residues 1178 to 1187 (KTQSKISSLL) are compositionally biased toward polar residues. A PIP-box motif is present at residues 1180–1187 (QSKISSLL).

The protein belongs to the helicase family. RAD3/XPD subfamily. In terms of assembly, interacts with TERF1. Interacts (via PIP-box) with PCNA; the interaction is direct and essential for suppressing telomere fragility. Interacts with MMS19; the interaction mediates the association of RTEL1 with the cytosolic iron-sulfur protein assembly (CIA) complex.

It localises to the nucleus. The enzyme catalyses ATP + H2O = ADP + phosphate + H(+). A probable ATP-dependent DNA helicase implicated in telomere-length regulation, DNA repair and the maintenance of genomic stability. Acts as an anti-recombinase to counteract toxic recombination and limit crossover during meiosis. Regulates meiotic recombination and crossover homeostasis by physically dissociating strand invasion events and thereby promotes noncrossover repair by meiotic synthesis dependent strand annealing (SDSA) as well as disassembly of D loop recombination intermediates. Also disassembles T loops and prevents telomere fragility by counteracting telomeric G4-DNA structures, which together ensure the dynamics and stability of the telomere. The chain is Regulator of telomere elongation helicase 1 from Pongo abelii (Sumatran orangutan).